The sequence spans 100 residues: Urease subunit gamma (100 aa).

This sequence belongs to the urease gamma subunit family. As to quaternary structure, heterotrimer of UreA (gamma), UreB (beta) and UreC (alpha) subunits. Three heterotrimers associate to form the active enzyme.

The protein localises to the cytoplasm. The catalysed reaction is urea + 2 H2O + H(+) = hydrogencarbonate + 2 NH4(+). It functions in the pathway nitrogen metabolism; urea degradation; CO(2) and NH(3) from urea (urease route): step 1/1. The protein is Urease subunit gamma of Rhizobium etli (strain ATCC 51251 / DSM 11541 / JCM 21823 / NBRC 15573 / CFN 42).